The following is a 290-amino-acid chain: 4-hydroxybenzoate octaprenyltransferase (290 aa).

The next 8 membrane-spanning stretches (helical) occupy residues 23–43 (IGALLLLWPTLWALWVATPGV), 46–66 (LWIMAVFVAGVWLMRAAGCVV), 99–119 (LFVVLVLISFLLVLTLNTMTI), 141–161 (LPQVVLGAAFGWSIPMAFAAV), 163–183 (ESVPLSCWLMFLANILWAVAY), 213–233 (LIIGILQIGVLALMAIIGELN), 234–254 (GLGWGYYWSIVVAGALFVYQQ), and 268–288 (AFMNNNYVGLVLFLGLAMSYW).

It belongs to the UbiA prenyltransferase family. Mg(2+) serves as cofactor.

It localises to the cell inner membrane. The enzyme catalyses all-trans-octaprenyl diphosphate + 4-hydroxybenzoate = 4-hydroxy-3-(all-trans-octaprenyl)benzoate + diphosphate. Its pathway is cofactor biosynthesis; ubiquinone biosynthesis. Catalyzes the prenylation of para-hydroxybenzoate (PHB) with an all-trans polyprenyl group. Mediates the second step in the final reaction sequence of ubiquinone-8 (UQ-8) biosynthesis, which is the condensation of the polyisoprenoid side chain with PHB, generating the first membrane-bound Q intermediate 3-octaprenyl-4-hydroxybenzoate. The sequence is that of 4-hydroxybenzoate octaprenyltransferase from Shigella flexneri.